Here is a 213-residue protein sequence, read N- to C-terminus: Kynurenine formamidase (213 aa).

Position 20 (Trp-20) interacts with substrate. The Zn(2+) site is built by His-50, His-54, and Asp-56. His-60 serves as the catalytic Proton donor/acceptor. Positions 161 and 173 each coordinate Zn(2+).

It belongs to the Cyclase 1 superfamily. KynB family. Homodimer. Requires Zn(2+) as cofactor.

The enzyme catalyses N-formyl-L-kynurenine + H2O = L-kynurenine + formate + H(+). It functions in the pathway amino-acid degradation; L-tryptophan degradation via kynurenine pathway; L-kynurenine from L-tryptophan: step 2/2. Its function is as follows. Catalyzes the hydrolysis of N-formyl-L-kynurenine to L-kynurenine, the second step in the kynurenine pathway of tryptophan degradation. The protein is Kynurenine formamidase of Pseudomonas aeruginosa (strain UCBPP-PA14).